The following is a 181-amino-acid chain: Ribulose bisphosphate carboxylase small subunit, chloroplastic 2 (181 aa).

The transit peptide at 1 to 54 (MASSMLSSAAVVTSPAQATMVAPFTGLKSSAAFPVTRKANNDITSIASNGGRVS) directs the protein to the chloroplast.

The protein belongs to the RuBisCO small chain family. As to quaternary structure, heterohexadecamer of 8 large and 8 small subunits.

Its subcellular location is the plastid. It is found in the chloroplast. Functionally, ruBisCO catalyzes two reactions: the carboxylation of D-ribulose 1,5-bisphosphate, the primary event in carbon dioxide fixation, as well as the oxidative fragmentation of the pentose substrate. Both reactions occur simultaneously and in competition at the same active site. Although the small subunit is not catalytic it is essential for maximal activity. This chain is Ribulose bisphosphate carboxylase small subunit, chloroplastic 2, found in Brassica napus (Rape).